The sequence spans 720 residues: TAL effector protein Rip19 (720 aa).

Disordered regions lie at residues 13 to 85 and 175 to 205; these read SVSL…PSLV and QAFA…PTFL. Over residues 67-85 the composition is skewed to pro residues; that stretch reads PRRPLPVAPASAPPAPSLV. The Nuclear localization signal 1 signature appears at 185 to 191; that stretch reads RSARARR. A Cryptic repeat -1 repeat occupies 286–320; sequence LTRAHIVDIARQRSGDLALQALLPVATALTAAPLR. The Cryptic repeat 0 repeat unit spans residues 321–354; sequence LSASQIATVAQYGERPAIQALYRLRRKLTRAPLH. The stretch at 355–389 is one Core repeat 1 repeat; the sequence is LTPQQVVAIASHDGGKPALEAVWAKLPVLRGVPYA. The stretch at 390–423 is one Cryptic repeat +1 repeat; that stretch reads LSTAQVVAIACISGQQALEAIEAHMPTLRQAPHS. The Cryptic repeat +2 repeat unit spans residues 424 to 457; sequence LSPERVAAIACIGGRSAVEAVRQGLPVKAIRRIR. 3 consecutive short sequence motifs (nuclear localization signal) follow at residues 455–458, 583–586, and 620–623; these read RIRR, HRKR, and RRKR. The tract at residues 571-611 is disordered; that stretch reads SPGMAGQSACSPHRKRPAETAIAPRSIRRRPNNAGQPSEPW.

It belongs to the transcription activator-like effector (TALE) family. RipTAL/RTL subfamily.

The protein resides in the secreted. Its subcellular location is the host nucleus. Its function is as follows. Does not activate plant gene transcription, because it has too few core repeats. This is TAL effector protein Rip19 from Ralstonia solanacearum (Pseudomonas solanacearum).